Reading from the N-terminus, the 413-residue chain is Peptidase T (413 aa).

H81 contributes to the Zn(2+) binding site. D83 is an active-site residue. Position 143 (D143) interacts with Zn(2+). The Proton acceptor role is filled by E178. Zn(2+) is bound by residues E179, D201, and H383.

Belongs to the peptidase M20B family. Homodimer. Zn(2+) is required as a cofactor.

It localises to the cytoplasm. The enzyme catalyses Release of the N-terminal residue from a tripeptide.. Its activity is regulated as follows. Inhibited by EDTA, by the reducing agents dithiothreitol and 13-mercaptoethanol, and by the divalent cation Cu(2+). Cleaves the N-terminal amino acid of tripeptides. Has a broad specificity for tripeptides with no clear preference for a particular tripeptide. Tripeptides with proline in the second position are an exception and are not hydrolyzed. Does not hydrolyze dipeptides, tetrapeptides, or oligopeptides. This chain is Peptidase T (pepT), found in Lactococcus lactis subsp. cremoris (Streptococcus cremoris).